The chain runs to 141 residues: Large ribosomal subunit protein uL11 (141 aa).

Belongs to the universal ribosomal protein uL11 family. In terms of assembly, part of the ribosomal stalk of the 50S ribosomal subunit. Interacts with L10 and the large rRNA to form the base of the stalk. L10 forms an elongated spine to which L12 dimers bind in a sequential fashion forming a multimeric L10(L12)X complex. Post-translationally, one or more lysine residues are methylated.

Forms part of the ribosomal stalk which helps the ribosome interact with GTP-bound translation factors. In Alkaliphilus metalliredigens (strain QYMF), this protein is Large ribosomal subunit protein uL11.